Reading from the N-terminus, the 380-residue chain is Beta sliding clamp (380 aa).

It belongs to the beta sliding clamp family. In terms of assembly, forms a ring-shaped head-to-tail homodimer around DNA which binds and tethers DNA polymerases and other proteins to the DNA. The DNA replisome complex has a single clamp-loading complex (3 tau and 1 each of delta, delta', psi and chi subunits) which binds 3 Pol III cores (1 core on the leading strand and 2 on the lagging strand) each with a beta sliding clamp dimer. Additional proteins in the replisome are other copies of gamma, psi and chi, Ssb, DNA helicase and RNA primase.

The protein resides in the cytoplasm. Confers DNA tethering and processivity to DNA polymerases and other proteins. Acts as a clamp, forming a ring around DNA (a reaction catalyzed by the clamp-loading complex) which diffuses in an ATP-independent manner freely and bidirectionally along dsDNA. Initially characterized for its ability to contact the catalytic subunit of DNA polymerase III (Pol III), a complex, multichain enzyme responsible for most of the replicative synthesis in bacteria; Pol III exhibits 3'-5' exonuclease proofreading activity. The beta chain is required for initiation of replication as well as for processivity of DNA replication. The chain is Beta sliding clamp (dnaN) from Mycoplasma genitalium (strain ATCC 33530 / DSM 19775 / NCTC 10195 / G37) (Mycoplasmoides genitalium).